We begin with the raw amino-acid sequence, 131 residues long: Neurophysin 2 (131 aa).

7 disulfide bridges follow: Cys10-Cys55, Cys13-Cys27, Cys21-Cys45, Cys28-Cys35, Cys62-Cys74, Cys68-Cys86, and Cys75-Cys80.

It belongs to the vasopressin/oxytocin family.

The protein resides in the secreted. Its function is as follows. Neurophysin 2 specifically binds vasopressin. The polypeptide is Neurophysin 2 (Anser anser anser (Western greylag goose)).